Consider the following 335-residue polypeptide: DNA polymerase beta (335 aa).

Lysine 41 participates in a covalent cross-link: Glycyl lysine isopeptide (Lys-Gly) (interchain with G-Cter in ubiquitin). Lysine 60 serves as a coordination point for K(+). Position 60 (lysine 60) interacts with Na(+). A Glycyl lysine isopeptide (Lys-Gly) (interchain with G-Cter in ubiquitin) cross-link involves residue lysine 61. 2 residues coordinate K(+): leucine 62 and valine 65. Positions 62 and 65 each coordinate Na(+). The active-site Nucleophile; Schiff-base intermediate with DNA; for 5'-dRP lyase activity is lysine 72. At lysine 72 the chain carries N6-acetyllysine. Lysine 81 participates in a covalent cross-link: Glycyl lysine isopeptide (Lys-Gly) (interchain with G-Cter in ubiquitin). At arginine 83 the chain carries Omega-N-methylarginine; by PRMT6. The K(+) site is built by threonine 101, valine 103, and isoleucine 106. Na(+) contacts are provided by threonine 101, valine 103, and isoleucine 106. Arginine 149 is a dATP binding site. Residue arginine 149 coordinates dCTP. Arginine 149 is a dGTP binding site. Arginine 149 contacts dTTP. Omega-N-methylarginine; by PRMT6 is present on arginine 152. Residues serine 180, arginine 183, glycine 189, and aspartate 190 each contribute to the dATP site. The dCTP site is built by serine 180, arginine 183, glycine 189, and aspartate 190. DGTP is bound by residues serine 180, arginine 183, glycine 189, aspartate 190, and aspartate 192. Positions 180, 183, 189, and 190 each coordinate dTTP. The DNA-binding stretch occupies residues 183-192; that stretch reads RGAESSGDMD. The Mg(2+) site is built by aspartate 190, aspartate 192, and aspartate 256.

The protein belongs to the DNA polymerase type-X family. As to quaternary structure, monomer. Binds single-stranded DNA (ssDNA). Interacts with APEX1, LIG1, LIG3, FEN1, PCNA and XRCC1. Interacts with HUWE1/ARF-BP1, STUB1/CHIP and USP47. Interacts with FAM168A. The cofactor is Mg(2+). Post-translationally, methylation by PRMT6 stimulates the polymerase activity by enhancing DNA binding and processivity. In terms of processing, ubiquitinated at Lys-41, Lys-61 and Lys-81: monoubiquitinated by HUWE1/ARF-BP1. Monoubiquitinated protein is then the target of STUB1/CHIP, which catalyzes polyubiquitination from monoubiquitin, leading to degradation by the proteasome. USP47 mediates the deubiquitination of monoubiquitinated protein, preventing polyubiquitination by STUB1/CHIP and its subsequent degradation.

Its subcellular location is the nucleus. It localises to the cytoplasm. It catalyses the reaction DNA(n) + a 2'-deoxyribonucleoside 5'-triphosphate = DNA(n+1) + diphosphate. The enzyme catalyses a 5'-end 2'-deoxyribose-2'-deoxyribonucleotide-DNA = (2E,4S)-4-hydroxypenten-2-al-5-phosphate + a 5'-end 5'-phospho-2'-deoxyribonucleoside-DNA + H(+). It carries out the reaction 2'-deoxyribonucleotide-(2'-deoxyribose 5'-phosphate)-2'-deoxyribonucleotide-DNA = a 3'-end 2'-deoxyribonucleotide-(2,3-dehydro-2,3-deoxyribose 5'-phosphate)-DNA + a 5'-end 5'-phospho-2'-deoxyribonucleoside-DNA + H(+). Repair polymerase that plays a key role in base-excision repair. During this process, the damaged base is excised by specific DNA glycosylases, the DNA backbone is nicked at the abasic site by an apurinic/apyrimidic (AP) endonuclease, and POLB removes 5'-deoxyribose-phosphate from the preincised AP site acting as a 5'-deoxyribose-phosphate lyase (5'-dRP lyase); through its DNA polymerase activity, it adds one nucleotide to the 3' end of the arising single-nucleotide gap. Conducts 'gap-filling' DNA synthesis in a stepwise distributive fashion rather than in a processive fashion as for other DNA polymerases. It is also able to cleave sugar-phosphate bonds 3' to an intact AP site, acting as an AP lyase. This Homo sapiens (Human) protein is DNA polymerase beta (POLB).